The primary structure comprises 270 residues: Regulatory protein RecX (270 aa).

This sequence belongs to the RecX family.

It is found in the cytoplasm. Its function is as follows. Modulates RecA activity. This Bacillus cereus (strain AH187) protein is Regulatory protein RecX.